A 142-amino-acid polypeptide reads, in one-letter code: Cell division protein SepF (142 aa).

This sequence belongs to the SepF family. As to quaternary structure, homodimer. Interacts with FtsZ.

It localises to the cytoplasm. Cell division protein that is part of the divisome complex and is recruited early to the Z-ring. Probably stimulates Z-ring formation, perhaps through the cross-linking of FtsZ protofilaments. Its function overlaps with FtsA. The protein is Cell division protein SepF of Geobacillus kaustophilus (strain HTA426).